The chain runs to 548 residues: Folylpolyglutamate synthase (548 aa).

130-133 (GKGS) is a binding site for ATP. Mg(2+) contacts are provided by Ser-157, Glu-234, and His-262. ATP contacts are provided by Arg-382 and Asp-396.

This sequence belongs to the folylpolyglutamate synthase family. Requires a monovalent cation as cofactor.

It is found in the mitochondrion inner membrane. The protein localises to the mitochondrion matrix. The protein resides in the cytoplasm. The enzyme catalyses (6S)-5,6,7,8-tetrahydrofolyl-(gamma-L-Glu)(n) + L-glutamate + ATP = (6S)-5,6,7,8-tetrahydrofolyl-(gamma-L-Glu)(n+1) + ADP + phosphate + H(+). The protein operates within cofactor biosynthesis; tetrahydrofolylpolyglutamate biosynthesis. Functionally, catalyzes conversion of folates to polyglutamate derivatives allowing concentration of folate compounds in the cell and the intracellular retention of these cofactors, which are important substrates for most of the folate-dependent enzymes that are involved in one-carbon transfer reactions involved in purine, pyrimidine and amino acid synthesis. Required for methionine synthesis and maintenance of intact mitochondrial DNA. Involved in telomere maintenance. This Saccharomyces cerevisiae (strain FostersB) (Baker's yeast) protein is Folylpolyglutamate synthase.